The primary structure comprises 221 residues: Guanylate kinase (221 aa).

The Guanylate kinase-like domain occupies 20–198 (GSLFMVVAPS…ALAELRTVVQ (179 aa)). 27–34 (APSGAGKS) is a binding site for ATP.

The protein belongs to the guanylate kinase family.

It localises to the cytoplasm. It carries out the reaction GMP + ATP = GDP + ADP. Its function is as follows. Essential for recycling GMP and indirectly, cGMP. In Ralstonia nicotianae (strain ATCC BAA-1114 / GMI1000) (Ralstonia solanacearum), this protein is Guanylate kinase.